A 253-amino-acid polypeptide reads, in one-letter code: uncharacterized protein (253 aa).

2 C2HC LYAR-type zinc fingers span residues 1–26 and 27–51; these read MVFF…FQCR and NTTF…VKCI. Zn(2+) contacts are provided by cysteine 6, cysteine 9, histidine 21, cysteine 25, cysteine 32, cysteine 35, histidine 47, and cysteine 50. Positions 136-171 form a coiled coil; sequence AAEADKMREEAIRKQEETQKMEKAQKEAAAAAKKET.

Its subcellular location is the nucleus. This is an uncharacterized protein from Caenorhabditis elegans.